The sequence spans 1353 residues: MSKSLAYPPRKWYRRVPFLSDKSSLTLLDSNGNRKITPEASASLWNWFFFSWLNPLIAIGYSRPHIQSELYLLPPSSDVSVYAGKLDGHIEGLRERVPEGGGKRRRFNFHSPSWRLARALNASVLVWFWVGGAMKLFADVATITSPLLVRAIIRFLQTSEQNRKAGLPEPSIGQGFGMAIGLALLLASGVMANVHGFYRSYTSGILLRSALIDSLFRRTSAFSPLERAKHNLETSRIISMISTDVSRIDFACGYFHATWTSVIQILICLGLTIASLGPAALTGFGLMAILVPSQNYIVKYLFLLRKRSMPFTDARLSAISEALASIRLVKVYAWESALLSKISFLRRSELKLLRSRLLLRAVNVALSFSVPTLAAVVSFVTYAALGNELDAAEVFSALTLFMLLRTPLLLLPVAFGAAADGANAIQRLAGAFDAPMPDHGLPIDGDIEAAVEVKDATVSYRVQDHSDEKSEKQTSSFQLTNLTVHINRGELFMIVGPVGAGKSTFLGSLVGETRLETGHAVLGSRAAYAPQQAWLKSGSIRENIVFGRPWNPDRYNSVLSACCLTQDLSTFPSGDETMIGENGISLSGGQRQRVALARTIYEPSPLLLLDDVFSALDAHVQSEVVQKVVLERDPGTTLVLVTHSLHLLRHADRICCLNEGRVEEMGSFAELMGKEGGQMRRVVEEFASKSSAEEEEVEDGDLKDGVPSTDGGDASQTTSNKAMMQTEERFIGSVTARTYASYIRAGKPAFTLTFFILSMLIFQGGSILSPLWLQWWQEGRFPTLSSGTYMGVYAALGVSQAIGLLAMSSIFGFFIFYSACQIHADAIRSVLYAPISFFDTTPLGRITHRFSKDIDAIDNVIGEAFRMLLSTVAQVVGAVVLISIILPWFLLAVFVIVILYILTGMYYRPTARELRRLDALTRSPIYEHVSESLNGIMVIRSLGALQTTLDRNRENLNTENSPYWLSVACQRWLSVRLDLLGTCLVLLVGLIVVGSRSSISAAQGGVALSYIVTVQAVFGFMIRQSAEIENNMNAIERLLYYSHDVPQEPPHKREGDVGLVEKKWPGQGAIEMRDVVFTHREGLEPSLRGVNLVIPAGCRLALVGRTGSGKSTMLAALVGMGEITAGTIMVDGVDVSTIGLNLLRKRIAFMPQEAAVLSGTLRYNLDPFGEHDDADLWRVMHQVGLSSISAQSSAETLTSSDQEKSSPDDAAISPSSHSHSQHLTLDTPIHAERSDLSSGQRSLISLARALIKDASIFVLDEATASMDMELDHRLQRVLRENLRGKTTIVIAHRLDSVVGSSDLICVMDEGRVAQCGSPMDLFGEEGGHFRSLCSDAGLGELDLVEARRRFVSS.

Residues 40–60 (ASASLWNWFFFSWLNPLIAIG) form a helical membrane-spanning segment. N-linked (GlcNAc...) asparagine glycosylation occurs at N121. 6 helical membrane-spanning segments follow: residues 124–144 (VLVW…ATIT), 172–192 (IGQG…GVMA), 250–270 (FACG…ICLG), 271–291 (LTIA…AILV), 364–384 (VALS…TYAA), and 397–417 (ALTL…AFGA). The region spanning 129–420 (WVGGAMKLFA…LPVAFGAAAD (292 aa)) is the ABC transmembrane type-1 1 domain. The region spanning 460–684 (YRVQDHSDEK…EGGQMRRVVE (225 aa)) is the ABC transporter 1 domain. An N-linked (GlcNAc...) asparagine glycan is attached at N481. Residue 496-503 (GPVGAGKS) coordinates ATP. The segment at 687 to 720 (ASKSSAEEEEVEDGDLKDGVPSTDGGDASQTTSN) is disordered. The next 6 helical transmembrane spans lie at 748 to 768 (PAFT…GSIL), 796 to 816 (LGVS…FFIF), 864 to 882 (AFRM…VVLI), 888 to 907 (WFLL…GMYY), 973 to 993 (LSVR…LIVV), and 1002 to 1022 (AQGG…GFMI). The region spanning 756 to 1030 (ILSMLIFQGG…MIRQSAEIEN (275 aa)) is the ABC transmembrane type-1 2 domain. Residues 1070 to 1334 (IEMRDVVFTH…EGGHFRSLCS (265 aa)) enclose the ABC transporter 2 domain. 1104 to 1111 (GRTGSGKS) serves as a coordination point for ATP. A compositionally biased stretch (polar residues) spans 1191–1200 (QSSAETLTSS). The interval 1191–1223 (QSSAETLTSSDQEKSSPDDAAISPSSHSHSQHL) is disordered. Residues 1208 to 1218 (DDAAISPSSHS) are compositionally biased toward low complexity.

Belongs to the ABC transporter superfamily. ABCC family. Conjugate transporter (TC 3.A.1.208) subfamily.

It localises to the cell membrane. Multidrug resistance protein; part of the gene cluster 14 that mediates the biosynthesis of a ferrichrome A-like siderophors which may contribute to organismal virulence. The chain is ABC-type transporter MYCGRDRAFT_41235 from Zymoseptoria tritici (strain CBS 115943 / IPO323) (Speckled leaf blotch fungus).